Reading from the N-terminus, the 498-residue chain is ATP synthase subunit beta, chloroplastic (498 aa).

172–179 (GGAGVGKT) contributes to the ATP binding site.

It belongs to the ATPase alpha/beta chains family. As to quaternary structure, F-type ATPases have 2 components, CF(1) - the catalytic core - and CF(0) - the membrane proton channel. CF(1) has five subunits: alpha(3), beta(3), gamma(1), delta(1), epsilon(1). CF(0) has four main subunits: a(1), b(1), b'(1) and c(9-12).

It is found in the plastid. The protein localises to the chloroplast thylakoid membrane. It carries out the reaction ATP + H2O + 4 H(+)(in) = ADP + phosphate + 5 H(+)(out). Produces ATP from ADP in the presence of a proton gradient across the membrane. The catalytic sites are hosted primarily by the beta subunits. The polypeptide is ATP synthase subunit beta, chloroplastic (Licuala grandis (Ruffled fan palm)).